We begin with the raw amino-acid sequence, 82 residues long: Hydrogenase maturation factor HybG (82 aa).

The protein belongs to the HupF/HypC family.

The protein operates within protein modification; [NiFe] hydrogenase maturation. In terms of biological role, involved in the maturation of [NiFe] hydrogenases. Involved in the biosynthesis of the Fe(CN)(2)CO cofactor. HybG delivers iron-bound CO(2) to HypD where reduction to CO probably occurs. In complex with HypD, accepts the cyanide ligand generated by HypF and HypE, and also coordinates the carbon monoxide ligand. This Escherichia coli O157:H7 protein is Hydrogenase maturation factor HybG (hybG).